Here is a 398-residue protein sequence, read N- to C-terminus: MAKLTVKDVDLKGKKVLVRVDFNVPLKDGVITNDNRITAALPTIKYIIEQGGRAILFSHLGRVKEEADKEGKSLAPVAADLAAKLGQDVVFPGVTRGAKLEEAINALEDGQVLLVENTRFEDVDGKKESKNDEELGKYWASLGDGIFVNDAFGTAHRAHASNVGISANVEKAVAGFLLENEIAYIQEAVETPERPFVAILGGSKVSDKIGVIENLLEKADKVLIGGGMTYTFYKAQGIEIGNSLVEEDKLDVAKDLLEKSNGKLILPVDSKEANAFAGYTEVRDTEGEAVSEGFLGLDIGPKSIAKFDEALTGAKTVVWNGPMGVFENPDFQAGTIGVMDAIVKQLGVKSIIGGGDSAAAAINLGRADKFSWISTGGGASMELLEGKVLPGLAALTEK.

Substrate-binding positions include 21-23 (DFN), Arg36, 59-62 (HLGR), Arg119, and Arg157. ATP is bound by residues Lys208, Gly296, Glu327, and 354–357 (GGDS).

It belongs to the phosphoglycerate kinase family. Monomer.

It is found in the cytoplasm. The enzyme catalyses (2R)-3-phosphoglycerate + ATP = (2R)-3-phospho-glyceroyl phosphate + ADP. The protein operates within carbohydrate degradation; glycolysis; pyruvate from D-glyceraldehyde 3-phosphate: step 2/5. The polypeptide is Phosphoglycerate kinase (Streptococcus agalactiae serotype III (strain NEM316)).